The chain runs to 145 residues: Large-conductance mechanosensitive channel (145 aa).

3 helical membrane passes run Phe10–Ala30, Ile41–Ile61, and Gly87–Val107.

Belongs to the MscL family. As to quaternary structure, homopentamer.

The protein resides in the cell inner membrane. Functionally, channel that opens in response to stretch forces in the membrane lipid bilayer. May participate in the regulation of osmotic pressure changes within the cell. This is Large-conductance mechanosensitive channel from Psychrobacter arcticus (strain DSM 17307 / VKM B-2377 / 273-4).